A 245-amino-acid polypeptide reads, in one-letter code: uncharacterized protein (245 aa).

A signal peptide spans 1–27; the sequence is MKLKKRVSMFLVALTMCGGLFVTPAKA.

This is an uncharacterized protein from Bacillus subtilis (strain 168).